We begin with the raw amino-acid sequence, 353 residues long: Photosystem II D2 protein (353 aa).

Thr2 carries the post-translational modification N-acetylthreonine. Phosphothreonine is present on Thr2. A helical membrane pass occupies residues 41 to 61 (CAYFALGGWFTGTTFVTSWYT). His118 provides a ligand contact to chlorophyll a. The helical transmembrane segment at 125 to 141 (GFMLRQFELARSVQLRP) threads the bilayer. Residues Gln130 and Asn143 each contribute to the pheophytin a site. A helical transmembrane segment spans residues 153 to 166 (VFVSVFLIYPLGQS). His198 serves as a coordination point for chlorophyll a. Residues 208–228 (AALLCAIHGATVENTLFEDGD) traverse the membrane as a helical segment. His215 and Phe262 together coordinate a plastoquinone. Residue His215 coordinates Fe cation. Fe cation is bound at residue His269. Residues 279–295 (GLWMSAIGVVGLALNLR) traverse the membrane as a helical segment.

The protein belongs to the reaction center PufL/M/PsbA/D family. PSII is composed of 1 copy each of membrane proteins PsbA, PsbB, PsbC, PsbD, PsbE, PsbF, PsbH, PsbI, PsbJ, PsbK, PsbL, PsbM, PsbT, PsbX, PsbY, PsbZ, Psb30/Ycf12, at least 3 peripheral proteins of the oxygen-evolving complex and a large number of cofactors. It forms dimeric complexes. The D1/D2 heterodimer binds P680, chlorophylls that are the primary electron donor of PSII, and subsequent electron acceptors. It shares a non-heme iron and each subunit binds pheophytin, quinone, additional chlorophylls, carotenoids and lipids. There is also a Cl(-1) ion associated with D1 and D2, which is required for oxygen evolution. The PSII complex binds additional chlorophylls, carotenoids and specific lipids. serves as cofactor.

The protein localises to the plastid. The protein resides in the chloroplast thylakoid membrane. It carries out the reaction 2 a plastoquinone + 4 hnu + 2 H2O = 2 a plastoquinol + O2. Functionally, photosystem II (PSII) is a light-driven water:plastoquinone oxidoreductase that uses light energy to abstract electrons from H(2)O, generating O(2) and a proton gradient subsequently used for ATP formation. It consists of a core antenna complex that captures photons, and an electron transfer chain that converts photonic excitation into a charge separation. The D1/D2 (PsbA/PsbD) reaction center heterodimer binds P680, the primary electron donor of PSII as well as several subsequent electron acceptors. D2 is needed for assembly of a stable PSII complex. This is Photosystem II D2 protein from Cryptomeria japonica (Japanese cedar).